Reading from the N-terminus, the 512-residue chain is MAKIVDCFADRPIIVGSGLAGLIAALTISPEPSVLVTRSALGAETSSAWAQGGMSVSLSPDDNPSLHLADTLAAGDGLCDAVAAESIILEALDAFHVLQHFGIHFDQDSNGHLALGLEAAHSRRRIVHVGGDRSGTAIVQALTACVLNDPSITVLEGLEARHILMADNVVCGLLLANPTSEIVLPSSRILLATGGIGGLYDATTNPVNNFGQGIAMAARAGAVLADMEFVQFHPTALHCHNRPLALVSEAVRGEGAVLINERGERFMADIPGAELAARNIVAQAISAEITRGGQVFLDARQALGARFSTRFPTITALCHKVGIDPVHMPIPVCPAAHYHMGGIATDRQGRSSIPGLWVAGEAASTGLHGANRLASNSLLEAVVMGTRAARDITSHNTPHPLGTIPITPKKPDTTLIRPIVSQCLGVLRHAADMHRAIAALLPFVEGEEESSDPAIVALLIAIFAHLRTESRGAHARTDFPLKHDTTQRRNMTLEDVLEIAHSRIAQRKEKIS.

Residues 17-20 and 46-53 each bind FAD; these read SGLA and SSAWAQGG. Arg-278 functions as the Proton donor/acceptor in the catalytic mechanism. FAD-binding positions include Glu-361 and 377 to 378; that span reads SL.

It belongs to the FAD-dependent oxidoreductase 2 family. NadB subfamily. FAD is required as a cofactor.

It is found in the cytoplasm. It carries out the reaction L-aspartate + O2 = iminosuccinate + H2O2. Its pathway is cofactor biosynthesis; NAD(+) biosynthesis; iminoaspartate from L-aspartate (oxidase route): step 1/1. Its function is as follows. Catalyzes the oxidation of L-aspartate to iminoaspartate, the first step in the de novo biosynthesis of NAD(+). In Xylella fastidiosa (strain Temecula1 / ATCC 700964), this protein is L-aspartate oxidase (nadB).